Reading from the N-terminus, the 511-residue chain is MVVGQAKAAMGKISSAIGERSKRISGAMNEPLRKRKILLVIVCIAMLLDNMLYMVIVPIVPNYLETIRTYKLVYITIPSNGTNGSLLNSTQRAVLERNPNANEDIQIGVLFASKAILQLLSNPFTGTFIDRVGYDIPLLIGLTIMFFSTITFAFGESYAILFAARSLQGLGSAFADTSGIAMIADKYTEESERTQALGIALAFISFGSLVAPPFGGVLYQFAGKWVPFLVLSFVCLLDGILLLMVVTPFASRTRGNTLQGTPIHKLMIDPYIAVVAGALTTCNIPLAFLEPTISNWMKKTMNASEWQMGITWLPAFFPHILGVYITVKLAAKYPNYQWLYGAFGLVIIGVSSCTIPACRNFEELIIPLCALCFGIALVDTALLPTLAFLVDIRYVSVYGSVYAIADISYSVAYALGPIMAGQIVHDLGFVQLNLGMGLVNILYAPALLFLRNVCQMKPSLSERNILLEDGPKGLYDTIIMEERKAAKEPHGTSSGNHSVHAVLSDQEGYSE.

Residues 1-36 (MVVGQAKAAMGKISSAIGERSKRISGAMNEPLRKRK) are Cytoplasmic-facing. Residues 37-57 (ILLVIVCIAMLLDNMLYMVIV) form a helical membrane-spanning segment. Residues 58 to 108 (PIVPNYLETIRTYKLVYITIPSNGTNGSLLNSTQRAVLERNPNANEDIQIG) lie on the Lumenal, vesicle side of the membrane. Residues Asn-80, Asn-83, and Asn-88 are each glycosylated (N-linked (GlcNAc...) asparagine). The chain crosses the membrane as a helical span at residues 109–129 (VLFASKAILQLLSNPFTGTFI). The Cytoplasmic segment spans residues 130 to 135 (DRVGYD). A helical membrane pass occupies residues 136-156 (IPLLIGLTIMFFSTITFAFGE). Residues 157-165 (SYAILFAAR) lie on the Lumenal, vesicle side of the membrane. The chain crosses the membrane as a helical span at residues 166–186 (SLQGLGSAFADTSGIAMIADK). Over 187–197 (YTEESERTQAL) the chain is Cytoplasmic. Residues 198-218 (GIALAFISFGSLVAPPFGGVL) traverse the membrane as a helical segment. Residues 219–225 (YQFAGKW) lie on the Lumenal, vesicle side of the membrane. The chain crosses the membrane as a helical span at residues 226 to 246 (VPFLVLSFVCLLDGILLLMVV). Residues 247 to 267 (TPFASRTRGNTLQGTPIHKLM) lie on the Cytoplasmic side of the membrane. Residues 268-288 (IDPYIAVVAGALTTCNIPLAF) traverse the membrane as a helical segment. The Lumenal, vesicle segment spans residues 289 to 306 (LEPTISNWMKKTMNASEW). Asn-302 carries N-linked (GlcNAc...) asparagine glycosylation. The chain crosses the membrane as a helical span at residues 307–327 (QMGITWLPAFFPHILGVYITV). Residues 328–337 (KLAAKYPNYQ) lie on the Cytoplasmic side of the membrane. A helical transmembrane segment spans residues 338–358 (WLYGAFGLVIIGVSSCTIPAC). Residues 359–363 (RNFEE) lie on the Lumenal, vesicle side of the membrane. The chain crosses the membrane as a helical span at residues 364 to 384 (LIIPLCALCFGIALVDTALLP). The Cytoplasmic portion of the chain corresponds to 385-400 (TLAFLVDIRYVSVYGS). The chain crosses the membrane as a helical span at residues 401–421 (VYAIADISYSVAYALGPIMAG). The Lumenal, vesicle segment spans residues 422-428 (QIVHDLG). A helical transmembrane segment spans residues 429–449 (FVQLNLGMGLVNILYAPALLF). Residues 450–511 (LRNVCQMKPS…VLSDQEGYSE (62 aa)) are Cytoplasmic-facing. Positions 486–511 (AKEPHGTSSGNHSVHAVLSDQEGYSE) are disordered.

It belongs to the major facilitator superfamily. Vesicular transporter family. In terms of tissue distribution, high expression in the electric lobe of the brain.

Its subcellular location is the membrane. In terms of biological role, involved in acetylcholine transport into synaptic vesicles. The sequence is that of Vesicular acetylcholine transporter from Torpedo torpedo (Common torpedo).